The following is a 103-amino-acid chain: Pro-corazonin (103 aa).

A signal peptide spans 1–19 (MSANVTLLLIFVTLASVTA). Q20 is modified (pyrrolidone carboxylic acid). Asparagine amide is present on N30. The propeptide occupies 34–103 (DQGHLRPELK…NLNAMMDAFY (70 aa)).

As to expression, expressed in corpora cardiaca (CC), corpora allata (CA), antennal lobe (AL) and gnathal ganglion (GNG) (at protein level). Expression in CC and CA detected in all animals, expression in AL and in GNG in some animals.

Its subcellular location is the secreted. Its function is as follows. Cardioactive peptide. Corazonin is probably involved in the physiological regulation of the heart beat. The sequence is that of Pro-corazonin from Agrotis ipsilon (Black cutworm moth).